The primary structure comprises 307 residues: Fructokinase (307 aa).

The protein belongs to the carbohydrate kinase PfkB family.

It carries out the reaction D-fructose + ATP = D-fructose 6-phosphate + ADP + H(+). The protein is Fructokinase (scrK) of Vibrio alginolyticus.